We begin with the raw amino-acid sequence, 141 residues long: Hemoglobin subunit alpha-D (141 aa).

The region spanning Met-1–Arg-141 is the Globin domain. The heme b site is built by His-58 and His-87.

It belongs to the globin family. Heterotetramer of two alpha-D chains and two beta chains. As to expression, red blood cells.

Functionally, involved in oxygen transport from the lung to the various peripheral tissues. In Chrysemys picta bellii (Western painted turtle), this protein is Hemoglobin subunit alpha-D (HBAD).